Here is a 466-residue protein sequence, read N- to C-terminus: Ribulose bisphosphate carboxylase large chain (466 aa).

Residue Lys-5 is modified to N6,N6,N6-trimethyllysine. Residues Asn-114 and Thr-164 each coordinate substrate. Catalysis depends on Lys-166, which acts as the Proton acceptor. Lys-168 contacts substrate. Mg(2+) contacts are provided by Lys-192, Asp-194, and Glu-195. Residue Lys-192 is modified to N6-carboxylysine. The active-site Proton acceptor is the His-285. Residues Arg-286, His-318, and Ser-370 each coordinate substrate.

Belongs to the RuBisCO large chain family. Type I subfamily. Heterohexadecamer of 8 large chains and 8 small chains; disulfide-linked. The disulfide link is formed within the large subunit homodimers. Mg(2+) serves as cofactor. The disulfide bond which can form in the large chain dimeric partners within the hexadecamer appears to be associated with oxidative stress and protein turnover.

The protein localises to the plastid. It localises to the chloroplast. The enzyme catalyses 2 (2R)-3-phosphoglycerate + 2 H(+) = D-ribulose 1,5-bisphosphate + CO2 + H2O. It catalyses the reaction D-ribulose 1,5-bisphosphate + O2 = 2-phosphoglycolate + (2R)-3-phosphoglycerate + 2 H(+). RuBisCO catalyzes two reactions: the carboxylation of D-ribulose 1,5-bisphosphate, the primary event in carbon dioxide fixation, as well as the oxidative fragmentation of the pentose substrate in the photorespiration process. Both reactions occur simultaneously and in competition at the same active site. The protein is Ribulose bisphosphate carboxylase large chain of Poliothyrsis sinensis (Chinese pearlbloom tree).